The following is a 397-amino-acid chain: Acetate kinase (397 aa).

Mg(2+) is bound at residue asparagine 8. Position 15 (lysine 15) interacts with ATP. Arginine 89 is a binding site for substrate. The active-site Proton donor/acceptor is the aspartate 146. Residues 206-210 (HVGNG), 283-285 (DMR), and 331-335 (GIGEN) contribute to the ATP site. Glutamate 383 is a binding site for Mg(2+).

Belongs to the acetokinase family. Homodimer. Mg(2+) serves as cofactor. The cofactor is Mn(2+).

It localises to the cytoplasm. It catalyses the reaction acetate + ATP = acetyl phosphate + ADP. Its pathway is metabolic intermediate biosynthesis; acetyl-CoA biosynthesis; acetyl-CoA from acetate: step 1/2. Functionally, catalyzes the formation of acetyl phosphate from acetate and ATP. Can also catalyze the reverse reaction. The polypeptide is Acetate kinase (Streptococcus thermophilus (strain ATCC BAA-491 / LMD-9)).